Consider the following 105-residue polypeptide: Nitrogen fixation nifHD region GlnB-like protein 1 (105 aa).

The protein belongs to the P(II) protein family.

In terms of biological role, could be involved in the regulation of nitrogen fixation. The protein is Nitrogen fixation nifHD region GlnB-like protein 1 (glnBA) of Methanothermobacter marburgensis (strain ATCC BAA-927 / DSM 2133 / JCM 14651 / NBRC 100331 / OCM 82 / Marburg) (Methanobacterium thermoautotrophicum).